We begin with the raw amino-acid sequence, 700 residues long: Protein UL29/28 (700 aa).

The tract at residues 1–30 (MSGRRKGCSAATASSSSSSPPSRLPLPGHA) is disordered. Residues 9–21 (SAATASSSSSSPP) are compositionally biased toward low complexity.

Belongs to the herpesviridae US22 family. Interacts with UL38 and host HDAC1; these interactions are necessary for the HDAC1 interaction with UL38. Interacts with host MTA2.

The protein resides in the virion. Its subcellular location is the host nucleus. The protein localises to the host cytoplasm. Its function is as follows. Contributes to activation of immediate-early gene expression. The sequence is that of Protein UL29/28 (UL29) from Human cytomegalovirus (strain Merlin) (HHV-5).